Here is a 656-residue protein sequence, read N- to C-terminus: MSKPLLEVSACYRSFQAGEQQLTVLKDINLSIARGEMVAIVGASGSGKSTLMNILGCLDKPSKGSYFIDGQDTSQMDVDELAKLRREHFGFIFQRYHLLGDLNAVGNVEVPAVYAGKDRLERRERAESLLSRLGLGERLDHKPNQLSGGQQQRVSVARALMNGGDVILADEPTGALDSHSGEEMMRLLQELHREGQTIIIVTHDMHVAQHADRIIEIKDGVIISDEPNPASNIAAAPKTEVIPAKTKARARVAAWDRYAEALKMALLAMSTHRLRTFLTMLGIIIGIASVVSVVALGEGSQREILKSISSMGTNTIDIRPGSGFGDRRSARVRTLTASDANALKNLPYVDSVTPSIGSSATVRYGNKAVTATVNGVGPEFFRVRGYELAQGQFWDDDSVNALAQDAVIDENTRKQLFPNSSGAMNSAIGEVIFLGDLPVRIIGVTQPKESAFGNSDALNVWVPYTTVSGRMVGKKYLDGITVRLDESVPSNAAEQGIISLLKMRHGTQDFFTINTDTIRQNIEKTTATMTLLISAIAVISLVVGGIGVMNIMLVSVTERTREIGVRMAVGARQSDILRQFLIEAVLVCLCGGALGVALAYLIGVVFAQAGGSFQMIYSTTSIVAAFACSTLIGVLFGFLPARNAARLDPVDALARE.

An ABC transporter domain is found at 6–244; that stretch reads LEVSACYRSF…AAPKTEVIPA (239 aa). 42-49 contributes to the ATP binding site; the sequence is GASGSGKS. The next 4 membrane-spanning stretches (helical) occupy residues 277–297, 531–551, 586–606, and 621–641; these read FLTM…VALG, LLIS…VMNI, LVCL…GVVF, and SIVA…FLPA.

The protein belongs to the ABC transporter superfamily. Macrolide exporter (TC 3.A.1.122) family. In terms of assembly, homodimer. Part of the tripartite efflux system MacAB-TolC, which is composed of an inner membrane transporter, MacB, a periplasmic membrane fusion protein, MacA, and an outer membrane component, TolC. The complex forms a large protein conduit and can translocate molecules across both the inner and outer membranes. Interacts with MacA.

The protein resides in the cell inner membrane. In terms of biological role, part of the tripartite efflux system MacAB-TolC. MacB is a non-canonical ABC transporter that contains transmembrane domains (TMD), which form a pore in the inner membrane, and an ATP-binding domain (NBD), which is responsible for energy generation. Confers resistance against macrolides. The polypeptide is Macrolide export ATP-binding/permease protein MacB (Shewanella sp. (strain ANA-3)).